The following is a 422-amino-acid chain: UDP-N-acetylglucosamine 1-carboxyvinyltransferase (422 aa).

22–23 (KN) provides a ligand contact to phosphoenolpyruvate. Residue Arg93 participates in UDP-N-acetyl-alpha-D-glucosamine binding. The active-site Proton donor is Cys117. Cys117 carries the 2-(S-cysteinyl)pyruvic acid O-phosphothioketal modification. Residues 122–126 (RPVDL), Asp308, and Leu330 contribute to the UDP-N-acetyl-alpha-D-glucosamine site.

The protein belongs to the EPSP synthase family. MurA subfamily.

It localises to the cytoplasm. The catalysed reaction is phosphoenolpyruvate + UDP-N-acetyl-alpha-D-glucosamine = UDP-N-acetyl-3-O-(1-carboxyvinyl)-alpha-D-glucosamine + phosphate. The protein operates within cell wall biogenesis; peptidoglycan biosynthesis. Cell wall formation. Adds enolpyruvyl to UDP-N-acetylglucosamine. The protein is UDP-N-acetylglucosamine 1-carboxyvinyltransferase of Helicobacter pylori (strain HPAG1).